A 479-amino-acid chain; its full sequence is MEMLYGIMPEISLLLSALIFQLIGAYSNNTLTHVIAKMAIGFAAILIAILVFHPSWFNGIYWNNTFIVNQSKIYLKIIILIFYIFLTLIYSGYIKVANLKGHSEYIVLMQLGALGGLILVSANDFMVMYLGIEMQGIIGYILTTFNYNNSRSSEAGLKYFILGTVFSAIMLFGISLVYGTTQSIRYDIALHALQNPSSDMAVLVAAILMILVGVLFKLSIAPFHMWTPDIYDGAPLVVVALFSSLPKISVLALLGNLLSELKFASDAFFYIKTIIMVLACLSLIVGAFGALLQQSIQRFIAYSAILNLGYAVLALVANSSNVIRAEISYFYIIIYAASMLGFIAIIINNFTNRANYLKISHLSGLSNVKKLSSILIAIQMFSLVGIPPFAGFISKYIIFTSILKSGMYELIIMGIAAVVIGSYCYLNIVKVMYFLPATVRFQNSSVNFELSLVSIASTIIVISLMIICMLFGEGLNVIV.

14 helical membrane passes run 3-23 (MLYGIMPEISLLLSALIFQLI), 40-60 (IGFAAILIAILVFHPSWFNGI), 77-97 (IIILIFYIFLTLIYSGYIKVA), 102-122 (HSEYIVLMQLGALGGLILVSA), 125-145 (FMVMYLGIEMQGIIGYILTTF), 159-179 (YFILGTVFSAIMLFGISLVYG), 200-220 (MAVLVAAILMILVGVLFKLSI), 234-254 (APLVVVALFSSLPKISVLALL), 268-288 (FFYIKTIIMVLACLSLIVGAF), 299-319 (FIAYSAILNLGYAVLALVANS), 327-347 (ISYFYIIIYAASMLGFIAIII), 373-393 (SILIAIQMFSLVGIPPFAGFI), 409-429 (ELIIMGIAAVVIGSYCYLNIV), and 452-472 (LVSIASTIIVISLMIICMLFG).

It belongs to the complex I subunit 2 family. As to quaternary structure, NDH-1 is composed of 14 different subunits. Subunits NuoA, H, J, K, L, M, N constitute the membrane sector of the complex.

It localises to the cell inner membrane. The enzyme catalyses a quinone + NADH + 5 H(+)(in) = a quinol + NAD(+) + 4 H(+)(out). Functionally, NDH-1 shuttles electrons from NADH, via FMN and iron-sulfur (Fe-S) centers, to quinones in the respiratory chain. The immediate electron acceptor for the enzyme in this species is believed to be ubiquinone. Couples the redox reaction to proton translocation (for every two electrons transferred, four hydrogen ions are translocated across the cytoplasmic membrane), and thus conserves the redox energy in a proton gradient. This chain is NADH-quinone oxidoreductase subunit N, found in Orientia tsutsugamushi (strain Ikeda) (Rickettsia tsutsugamushi).